The sequence spans 258 residues: Hydroxypyruvate isomerase (258 aa).

Catalysis depends on proton donor/acceptor residues Glu-143 and Glu-240.

The protein belongs to the hyi family. In terms of assembly, homodimer.

It catalyses the reaction 3-hydroxypyruvate = 2-hydroxy-3-oxopropanoate. With respect to regulation, not stimulated by addition of pyridoxal 5'-phosphate (0.1 mM), FAD, NAD(+), NADP(+) or ATP (1 mM each). EDTA (10 mM) and metal ions (1 mM) such as Ca(2+), Co(2+), Mg(2+), Ni(2+), Zn(2+) do not affect the enzyme activity. Functionally, catalyzes the reversible isomerization between hydroxypyruvate and 2-hydroxy-3-oxopropanoate (also termed tartronate semialdehyde). Does not catalyze the isomerization of D-fructose to D-glucose or that of D-xylulose to D-xylose. Also does not catalyze racemization of serine, alanine, glycerate or lactate. The sequence is that of Hydroxypyruvate isomerase (hyi) from Escherichia coli (strain K12).